We begin with the raw amino-acid sequence, 439 residues long: Proline--tRNA ligase (439 aa).

Belongs to the class-II aminoacyl-tRNA synthetase family. ProS type 2 subfamily. As to quaternary structure, homodimer.

The protein localises to the cytoplasm. The catalysed reaction is tRNA(Pro) + L-proline + ATP = L-prolyl-tRNA(Pro) + AMP + diphosphate. Functionally, catalyzes the attachment of proline to tRNA(Pro) in a two-step reaction: proline is first activated by ATP to form Pro-AMP and then transferred to the acceptor end of tRNA(Pro). The chain is Proline--tRNA ligase from Beijerinckia indica subsp. indica (strain ATCC 9039 / DSM 1715 / NCIMB 8712).